Consider the following 442-residue polypeptide: DMATS-type prenyltransferase mfmD (442 aa).

Belongs to the tryptophan dimethylallyltransferase family.

It participates in secondary metabolite biosynthesis; terpenoid biosynthesis. Its function is as follows. Prenyltransferase; part of the gene cluster that mediates the biosynthesis of the phthalide-terpenoid hybrid 11'-O-desmethylfendlerol. Within the pathway, mfmD is responsible for farnesylation of the cyclopolic acid intermediate via an O-prenylation reaction. The biosynthesis of 11'-O-desmethylfendlerol begins with the NR-PKS mfmB that forms 3,5-dimethylorsellinic acid (DMOA), which is then transformed into the phthalide 5,7-dihydroxy-4-(hydroxymethyl)-6-methylphthalide by the cytochrome P450 monooxygenase mfmA and the hydrolase mfmC. Subsequently, the methyltransferase mfmE catalyzes 7-O-methylation to yield 5-hydroxy-4-(hydroxymethyl)-7-methoxy-6-methylphthalide, which undergoes C-3 hydroxylation by the cytochrome P450 monooxygenase mfmF. The resultant cyclopolic acid (2,5-dihydroxy-4-(hydroxymethyl)-7-methoxy-6-methylphthalide) is then farnesylated by the DMATS-type prenyltransferase mfmD to afford 5-O-farnesylcyclopolic acid. Finally, the Pyr4-family terpene cyclase mfmH cyclizes the farnesyl moiety of 5-O-farnesylcyclopolic acid into a drimane-like structure, thus completing the biosynthesis of 11'-O-desmethylfendlerol. This is DMATS-type prenyltransferase mfmD from Annulohypoxylon moriforme (Filamentous fungus).